A 65-amino-acid polypeptide reads, in one-letter code: Large ribosomal subunit protein bL35 (65 aa).

This sequence belongs to the bacterial ribosomal protein bL35 family.

The sequence is that of Large ribosomal subunit protein bL35 from Synechococcus sp. (strain CC9311).